The sequence spans 991 residues: Translation initiation factor IF-2 (991 aa).

3 disordered regions span residues 53-85 (SHGTSGADRKKITLTKKSTSEIKQADASGKART), 97-175 (VKRD…EAAE), and 312-395 (GIKG…DRGG). Basic and acidic residues-rich tracts occupy residues 97-113 (VKRDDPTGASSESHDSQ) and 125-175 (ELQR…EAAE). Residues 323–338 (AAGAPAPGAAPGAAAK) show a composition bias toward low complexity. Residues 339 to 349 (PGEKKSVKSEK) are compositionally biased toward basic and acidic residues. In terms of domain architecture, tr-type G spans 491–658 (PRPPVVTVMG…QVLLQAEVLE (168 aa)). Residues 500 to 507 (GHVDHGKT) form a G1 region. 500 to 507 (GHVDHGKT) lines the GTP pocket. A G2 region spans residues 525-529 (GITQH). Residues 546 to 549 (DTPG) are G3. Residues 546 to 550 (DTPGH) and 600 to 603 (NKID) each bind GTP. The tract at residues 600 to 603 (NKID) is G4. The tract at residues 636–638 (SAK) is G5.

It belongs to the TRAFAC class translation factor GTPase superfamily. Classic translation factor GTPase family. IF-2 subfamily.

It localises to the cytoplasm. In terms of biological role, one of the essential components for the initiation of protein synthesis. Protects formylmethionyl-tRNA from spontaneous hydrolysis and promotes its binding to the 30S ribosomal subunits. Also involved in the hydrolysis of GTP during the formation of the 70S ribosomal complex. This Leptothrix cholodnii (strain ATCC 51168 / LMG 8142 / SP-6) (Leptothrix discophora (strain SP-6)) protein is Translation initiation factor IF-2.